The sequence spans 340 residues: Uroporphyrinogen decarboxylase (340 aa).

Substrate-binding positions include 23-27, Asp-72, Tyr-147, Thr-202, and His-316; that span reads RQAGR.

The protein belongs to the uroporphyrinogen decarboxylase family. As to quaternary structure, homodimer.

The protein localises to the cytoplasm. The enzyme catalyses uroporphyrinogen III + 4 H(+) = coproporphyrinogen III + 4 CO2. Its pathway is porphyrin-containing compound metabolism; protoporphyrin-IX biosynthesis; coproporphyrinogen-III from 5-aminolevulinate: step 4/4. Catalyzes the decarboxylation of four acetate groups of uroporphyrinogen-III to yield coproporphyrinogen-III. This is Uroporphyrinogen decarboxylase from Trichlorobacter lovleyi (strain ATCC BAA-1151 / DSM 17278 / SZ) (Geobacter lovleyi).